Consider the following 145-residue polypeptide: D-aminoacyl-tRNA deacylase (145 aa).

The short motif at 137-138 is the Gly-cisPro motif, important for rejection of L-amino acids element; sequence GP.

It belongs to the DTD family. Homodimer.

Its subcellular location is the cytoplasm. It catalyses the reaction glycyl-tRNA(Ala) + H2O = tRNA(Ala) + glycine + H(+). It carries out the reaction a D-aminoacyl-tRNA + H2O = a tRNA + a D-alpha-amino acid + H(+). An aminoacyl-tRNA editing enzyme that deacylates mischarged D-aminoacyl-tRNAs. Also deacylates mischarged glycyl-tRNA(Ala), protecting cells against glycine mischarging by AlaRS. Acts via tRNA-based rather than protein-based catalysis; rejects L-amino acids rather than detecting D-amino acids in the active site. By recycling D-aminoacyl-tRNA to D-amino acids and free tRNA molecules, this enzyme counteracts the toxicity associated with the formation of D-aminoacyl-tRNA entities in vivo and helps enforce protein L-homochirality. The chain is D-aminoacyl-tRNA deacylase from Exiguobacterium sibiricum (strain DSM 17290 / CCUG 55495 / CIP 109462 / JCM 13490 / 255-15).